Reading from the N-terminus, the 360-residue chain is MLLLLAEYLQQFHKGFAVFQYLTLRGILGVLTALCLSLFLGPWMIRTLQNLQIGQSVRNDGPQSHLSKSGTPTMGGALILSSIGISTLLWADLHNRYVWVVLLVTLLFGAIGWVDDYRKVIEKNSKGLPSRWKYFWQSVFGVGAAIFLYTTAPSAVETTLIIPMLKDASIPLGIGFVVLTYFVIVGSSNAVNLTDGLDGLAIMPTVMVGGALGIFCYLSGNVKFAEYLLIPYVPGAGELIVFCGALIGAGLGFLWFNTYPAQVFMGDVGALALGAALGTIAVIVRQEIVLFIMGGVFVMETLSVVIQVASFKLTGRRVFRMAPIHHHFELKGWPEPRVIVRFWIITVILVLVGLATLKLR.

10 helical membrane passes run 25 to 45 (RGIL…PWMI), 73 to 93 (TMGG…WADL), 97 to 117 (YVWV…VDDY), 142 to 162 (VGAA…TLII), 168 to 188 (ASIP…VGSS), 199 to 219 (GLAI…CYLS), 236 to 256 (AGEL…FLWF), 263 to 283 (VFMG…IAVI), 288 to 308 (IVLF…VIQV), and 338 to 358 (VIVR…ATLK).

The protein belongs to the glycosyltransferase 4 family. MraY subfamily. Mg(2+) is required as a cofactor.

It localises to the cell inner membrane. The enzyme catalyses UDP-N-acetyl-alpha-D-muramoyl-L-alanyl-gamma-D-glutamyl-meso-2,6-diaminopimeloyl-D-alanyl-D-alanine + di-trans,octa-cis-undecaprenyl phosphate = di-trans,octa-cis-undecaprenyl diphospho-N-acetyl-alpha-D-muramoyl-L-alanyl-D-glutamyl-meso-2,6-diaminopimeloyl-D-alanyl-D-alanine + UMP. Its pathway is cell wall biogenesis; peptidoglycan biosynthesis. Functionally, catalyzes the initial step of the lipid cycle reactions in the biosynthesis of the cell wall peptidoglycan: transfers peptidoglycan precursor phospho-MurNAc-pentapeptide from UDP-MurNAc-pentapeptide onto the lipid carrier undecaprenyl phosphate, yielding undecaprenyl-pyrophosphoryl-MurNAc-pentapeptide, known as lipid I. The protein is Phospho-N-acetylmuramoyl-pentapeptide-transferase of Pseudomonas fluorescens (strain SBW25).